A 181-amino-acid chain; its full sequence is Shikimate kinase (181 aa).

23 to 28 (GTGKST) contacts ATP. Serine 27 contacts Mg(2+). Substrate contacts are provided by aspartate 45, arginine 69, and glycine 91. ATP is bound at residue arginine 129. Arginine 148 is a binding site for substrate.

Belongs to the shikimate kinase family. In terms of assembly, monomer. Mg(2+) serves as cofactor.

It localises to the cytoplasm. It catalyses the reaction shikimate + ATP = 3-phosphoshikimate + ADP + H(+). Its pathway is metabolic intermediate biosynthesis; chorismate biosynthesis; chorismate from D-erythrose 4-phosphate and phosphoenolpyruvate: step 5/7. Functionally, catalyzes the specific phosphorylation of the 3-hydroxyl group of shikimic acid using ATP as a cosubstrate. This Geobacter sulfurreducens (strain ATCC 51573 / DSM 12127 / PCA) protein is Shikimate kinase.